The chain runs to 307 residues: NAD kinase (307 aa).

Aspartate 78 (proton acceptor) is an active-site residue. Residues 78–79 (DG), histidine 83, 154–155 (NE), arginine 165, arginine 182, aspartate 184, and glutamine 255 each bind NAD(+).

The protein belongs to the NAD kinase family. Requires a divalent metal cation as cofactor.

The protein resides in the cytoplasm. The enzyme catalyses NAD(+) + ATP = ADP + NADP(+) + H(+). Functionally, involved in the regulation of the intracellular balance of NAD and NADP, and is a key enzyme in the biosynthesis of NADP. Catalyzes specifically the phosphorylation on 2'-hydroxyl of the adenosine moiety of NAD to yield NADP. The polypeptide is NAD kinase (Halorhodospira halophila (strain DSM 244 / SL1) (Ectothiorhodospira halophila (strain DSM 244 / SL1))).